Reading from the N-terminus, the 216-residue chain is Guanylate kinase (216 aa).

A Guanylate kinase-like domain is found at 15 to 193; it reads GNLFMVVAPS…ALKQLQNVVH (179 aa). 22–29 is a binding site for ATP; the sequence is APSGAGKS.

This sequence belongs to the guanylate kinase family.

Its subcellular location is the cytoplasm. It catalyses the reaction GMP + ATP = GDP + ADP. Functionally, essential for recycling GMP and indirectly, cGMP. The chain is Guanylate kinase from Cupriavidus metallidurans (strain ATCC 43123 / DSM 2839 / NBRC 102507 / CH34) (Ralstonia metallidurans).